The sequence spans 222 residues: Probable mitochondrial import inner membrane translocase subunit Tim17 3 (222 aa).

Transmembrane regions (helical) follow at residues 16 to 36 (CGCA…LKGF), 60 to 80 (SIAG…CALV), and 115 to 135 (ALVG…VATI).

This sequence belongs to the Tim17/Tim22/Tim23 family. Component of the TIM23 complex at least composed of Tim23, Tim17 (Tim17a1, Tim17a2 or Tim17b1) and a Tim50. The complex interacts with the Tim44 component of the PAM complex.

Its subcellular location is the mitochondrion inner membrane. Functionally, essential component of the TIM23 complex, a complex that mediates the translocation of transit peptide-containing proteins across the mitochondrial inner membrane. This Drosophila melanogaster (Fruit fly) protein is Probable mitochondrial import inner membrane translocase subunit Tim17 3 (Tim17a1).